The following is a 440-amino-acid chain: Protein eva-1 homolog C (440 aa).

The span at 1-13 (MLLPGHPRPPPAP) shows a compositional bias: pro residues. The disordered stretch occupies residues 1–23 (MLLPGHPRPPPAPQSAQNQGLRR). A signal peptide spans 1–48 (MLLPGHPRPPPAPQSAQNQGLRRQVEPPGQLLRLFYCTVLVCSKETSA). The Extracellular segment spans residues 49–321 (LTDFSGYLTK…AYIRAHPERA (273 aa)). N-linked (GlcNAc...) asparagine glycans are attached at residues asparagine 62, asparagine 109, and asparagine 165. The 93-residue stretch at 67–159 (ACDGDYLNLQ…KYLLVSFKCQ (93 aa)) folds into the SUEL-type lectin 1 domain. One can recognise an SUEL-type lectin 2 domain in the interval 168–260 (VCENQELKLH…KYLTVAYACV (93 aa)). Residues 322 to 342 (ALLFMSSVCIGLLLTLCALVI) traverse the membrane as a helical segment. Topologically, residues 343–440 (RVSCTKDFRE…SLPRNVGHFY (98 aa)) are cytoplasmic. The tract at residues 364–384 (SDKAEEDSEEDLEEEDSSDSQ) is disordered. A compositionally biased stretch (acidic residues) spans 367–381 (AEEDSEEDLEEEDSS).

This sequence belongs to the EVA1 family. As to expression, ubiquitous.

It localises to the cell membrane. Binds heparin. The polypeptide is Protein eva-1 homolog C (Eva1c) (Mus musculus (Mouse)).